Reading from the N-terminus, the 189-residue chain is Ras-like protein 1 (189 aa).

Residue 10 to 17 (GGGGVGKS) participates in GTP binding. The short motif at 32–40 (YDPTIEDSY) is the Effector region element. GTP contacts are provided by residues 57 to 61 (DTAGQ) and 116 to 119 (NKCD). Cys186 carries the post-translational modification Cysteine methyl ester. Residue Cys186 is the site of S-geranylgeranyl cysteine attachment. A propeptide spans 187 to 189 (LLL) (removed in mature form).

Belongs to the small GTPase superfamily. Ras family.

The protein localises to the cell membrane. It carries out the reaction GTP + H2O = GDP + phosphate + H(+). In terms of biological role, ras proteins bind GDP/GTP and possess intrinsic GTPase activity. This is Ras-like protein 1 (RAS1) from Physarum polycephalum (Slime mold).